A 91-amino-acid polypeptide reads, in one-letter code: MKGNANIKSAIKRVKTNEKRRIQNASVKSALRTAIKQFEAKVENNDAEAAKAAFVEATKKLDKAANKGLIHKNAASRQKSRLAKKLNGLSA.

The tract at residues K72–A91 is disordered.

This sequence belongs to the bacterial ribosomal protein bS20 family.

Its function is as follows. Binds directly to 16S ribosomal RNA. The polypeptide is Small ribosomal subunit protein bS20 (Halalkalibacterium halodurans (strain ATCC BAA-125 / DSM 18197 / FERM 7344 / JCM 9153 / C-125) (Bacillus halodurans)).